The sequence spans 273 residues: Glutamate transport system permease protein GluD (273 aa).

5 helical membrane passes run Ile-26–Val-46, Trp-64–Phe-84, Leu-100–Ile-120, Ile-150–Ala-170, and Leu-200–Leu-220. The region spanning Leu-30–Ala-221 is the ABC transmembrane type-1 domain. Positions Pro-242–Gln-273 are disordered. Basic and acidic residues predominate over residues Pro-262–Gln-273.

This sequence belongs to the binding-protein-dependent transport system permease family. HisMQ subfamily. The complex is composed of two ATP-binding proteins (GluA), two transmembrane proteins (GluC and GluD) and a solute-binding protein (GluB).

Its subcellular location is the cell membrane. Part of the ABC transporter complex GluABCD involved in glutamate uptake. Probably responsible for the translocation of the substrate across the membrane. This Corynebacterium glutamicum (strain ATCC 13032 / DSM 20300 / JCM 1318 / BCRC 11384 / CCUG 27702 / LMG 3730 / NBRC 12168 / NCIMB 10025 / NRRL B-2784 / 534) protein is Glutamate transport system permease protein GluD.